Consider the following 500-residue polypeptide: Glycerol kinase (500 aa).

Thr-16 provides a ligand contact to ADP. ATP-binding residues include Thr-16 and Thr-17. Thr-16 is a binding site for sn-glycerol 3-phosphate. Arg-20 contacts ADP. Sn-glycerol 3-phosphate contacts are provided by Arg-86, Glu-87, Tyr-138, and Asp-243. Glycerol contacts are provided by Arg-86, Glu-87, Tyr-138, Asp-243, and Gln-244. ADP is bound by residues Thr-265 and Gly-313. ATP is bound by residues Thr-265, Gly-313, Gln-317, and Gly-414. 2 residues coordinate ADP: Gly-414 and Asn-418.

The protein belongs to the FGGY kinase family.

It carries out the reaction glycerol + ATP = sn-glycerol 3-phosphate + ADP + H(+). Its pathway is polyol metabolism; glycerol degradation via glycerol kinase pathway; sn-glycerol 3-phosphate from glycerol: step 1/1. With respect to regulation, inhibited by fructose 1,6-bisphosphate (FBP). Functionally, key enzyme in the regulation of glycerol uptake and metabolism. Catalyzes the phosphorylation of glycerol to yield sn-glycerol 3-phosphate. The protein is Glycerol kinase of Nostoc sp. (strain PCC 7120 / SAG 25.82 / UTEX 2576).